Here is an 83-residue protein sequence, read N- to C-terminus: Cytochrome b559 subunit alpha (83 aa).

The chain crosses the membrane as a helical span at residues 21–35 (VIHSITIPSLFIAGW). A heme-binding site is contributed by His-23.

It belongs to the PsbE/PsbF family. As to quaternary structure, heterodimer of an alpha subunit and a beta subunit. PSII is composed of 1 copy each of membrane proteins PsbA, PsbB, PsbC, PsbD, PsbE, PsbF, PsbH, PsbI, PsbJ, PsbK, PsbL, PsbM, PsbT, PsbX, PsbY, PsbZ, Psb30/Ycf12, at least 3 peripheral proteins of the oxygen-evolving complex and a large number of cofactors. It forms dimeric complexes. It depends on heme b as a cofactor.

Its subcellular location is the plastid. The protein localises to the chloroplast thylakoid membrane. In terms of biological role, this b-type cytochrome is tightly associated with the reaction center of photosystem II (PSII). PSII is a light-driven water:plastoquinone oxidoreductase that uses light energy to abstract electrons from H(2)O, generating O(2) and a proton gradient subsequently used for ATP formation. It consists of a core antenna complex that captures photons, and an electron transfer chain that converts photonic excitation into a charge separation. The sequence is that of Cytochrome b559 subunit alpha from Chara vulgaris (Common stonewort).